The chain runs to 90 residues: uncharacterized protein (90 aa).

2 consecutive transmembrane segments (helical) span residues 23 to 43 (ITTI…VGLF) and 48 to 68 (VTLL…IIGF).

The protein resides in the cell membrane. This is an uncharacterized protein from Rickettsia prowazekii (strain Madrid E).